Consider the following 1102-residue polypeptide: Protein MMS22-like (1102 aa).

This sequence belongs to the MMS22 family. MMS22L subfamily.

Its subcellular location is the nucleus. It localises to the chromosome. Involved in recombination-dependent repair of stalled or collapsed replication forks. This is Protein MMS22-like from Drosophila melanogaster (Fruit fly).